Here is a 106-residue protein sequence, read N- to C-terminus: ATP-dependent Clp protease adapter protein ClpS (106 aa).

This sequence belongs to the ClpS family. As to quaternary structure, binds to the N-terminal domain of the chaperone ClpA.

Involved in the modulation of the specificity of the ClpAP-mediated ATP-dependent protein degradation. The protein is ATP-dependent Clp protease adapter protein ClpS of Salmonella agona (strain SL483).